A 74-amino-acid chain; its full sequence is Sec-independent protein translocase protein TatA (74 aa).

Residues 1-21 form a helical membrane-spanning segment; it reads MGGISIWQLLIIVAIVVLLFG. Positions 45 to 74 are disordered; sequence EEPKDAEFKSLDKAENTAQTKKEEKEKEQA.

This sequence belongs to the TatA/E family. In terms of assembly, the Tat system comprises two distinct complexes: a TatABC complex, containing multiple copies of TatA, TatB and TatC subunits, and a separate TatA complex, containing only TatA subunits. Substrates initially bind to the TatABC complex, which probably triggers association of the separate TatA complex to form the active translocon.

It is found in the cell inner membrane. Functionally, part of the twin-arginine translocation (Tat) system that transports large folded proteins containing a characteristic twin-arginine motif in their signal peptide across membranes. TatA could form the protein-conducting channel of the Tat system. This is Sec-independent protein translocase protein TatA from Actinobacillus succinogenes (strain ATCC 55618 / DSM 22257 / CCUG 43843 / 130Z).